The primary structure comprises 222 residues: Interleukin-12 subunit alpha (222 aa).

An N-terminal signal peptide occupies residues 1–25 (MCPPRGLLLVTILVLLSHLDHLTWA). 3 cysteine pairs are disulfide-bonded: cysteine 40-cysteine 113, cysteine 67-cysteine 199, and cysteine 88-cysteine 126. Residues asparagine 42, asparagine 96, and asparagine 110 are each glycosylated (N-linked (GlcNAc...) asparagine).

The protein belongs to the IL-6 superfamily. In terms of assembly, heterodimer with IL12B; disulfide-linked. This heterodimer is known as interleukin IL-12. Heterodimer with EBI3/IL27B; not disulfide-linked. This heterodimer is known as interleukin IL-35. Interacts with NBR1; this interaction promotes IL-12 secretion.

The protein localises to the secreted. Its function is as follows. Heterodimerizes with IL12B to form the IL-12 cytokine or with EBI3/IL27B to form the IL-35 cytokine. IL-12 is primarily produced by professional antigen-presenting cells (APCs) such as B-cells and dendritic cells (DCs) as well as macrophages and granulocytes and regulates T-cell and natural killer-cell responses, induces the production of interferon-gamma (IFN-gamma), favors the differentiation of T-helper 1 (Th1) cells and is an important link between innate resistance and adaptive immunity. Mechanistically, exerts its biological effects through a receptor composed of IL12R1 and IL12R2 subunits. Binding to the receptor results in the rapid tyrosine phosphorylation of a number of cellular substrates including the JAK family kinases TYK2 and JAK2. In turn, recruited STAT4 gets phosphorylated and translocates to the nucleus where it regulates cytokine/growth factor responsive genes. As part of IL-35, plays essential roles in maintaining the immune homeostasis of the liver microenvironment and also functions as an immune-suppressive cytokine. Mediates biological events through unconventional receptors composed of IL12RB2 and gp130/IL6ST heterodimers or homodimers. Signaling requires the transcription factors STAT1 and STAT4, which form a unique heterodimer that binds to distinct DNA sites. The chain is Interleukin-12 subunit alpha (IL12A) from Canis lupus familiaris (Dog).